Consider the following 694-residue polypeptide: Prolyl 3-hydroxylase 2 (694 aa).

Residues 1-23 form the signal peptide; it reads MAPGSRSWGAVLLLAAMLPAACG. 4 TPR repeats span residues 35–68, 136–169, 196–229, and 292–325; these read FDAL…RREL, RVPY…NPEH, HMED…YYAE, and PLHY…HPDD. Positions 386–418 form a coiled coil; that stretch reads KRYGARQDEHSVPSSISSEPEDGPRLSLTKKPT. Residues 395 to 427 are disordered; sequence HSVPSSISSEPEDGPRLSLTKKPTPKPDRELKE. N-linked (GlcNAc...) asparagine glycans are attached at residues Asn446 and Asn535. The region spanning 543-657 is the Fe2OG dioxygenase domain; the sequence is THLVCRTALS…RCAVALWFTL (115 aa). Positions 566, 568, and 638 each coordinate Fe cation. Arg648 is a catalytic residue. The Prevents secretion from ER motif lies at 691 to 694; it reads KDEL.

It belongs to the leprecan family. Fe cation serves as cofactor. Requires L-ascorbate as cofactor.

The protein resides in the endoplasmic reticulum. The protein localises to the sarcoplasmic reticulum. It is found in the golgi apparatus. It catalyses the reaction L-prolyl-[collagen] + 2-oxoglutarate + O2 = trans-3-hydroxy-L-prolyl-[collagen] + succinate + CO2. Prolyl 3-hydroxylase that catalyzes the post-translational formation of 3-hydroxyproline on collagens. Contributes to proline 3-hydroxylation of collagen COL4A1 and COL1A1 in tendons, the eye sclera and in the eye lens capsule. Has high activity with the type IV collagen COL4A1, and lower activity with COL1A1. Catalyzes hydroxylation of the first Pro in Gly-Pro-Hyp sequences where Hyp is 4-hydroxyproline. Has no activity on substrates that lack 4-hydroxyproline in the third position. This Gallus gallus (Chicken) protein is Prolyl 3-hydroxylase 2.